A 313-amino-acid chain; its full sequence is Ribosomal RNA small subunit methyltransferase H (313 aa).

S-adenosyl-L-methionine contacts are provided by residues 33-35 (GGH), aspartate 53, phenylalanine 80, aspartate 102, and glutamine 109. A disordered region spans residues 291-313 (SDEEMRANPRAQSAKLRAAEKIR).

The protein belongs to the methyltransferase superfamily. RsmH family.

It localises to the cytoplasm. The enzyme catalyses cytidine(1402) in 16S rRNA + S-adenosyl-L-methionine = N(4)-methylcytidine(1402) in 16S rRNA + S-adenosyl-L-homocysteine + H(+). Functionally, specifically methylates the N4 position of cytidine in position 1402 (C1402) of 16S rRNA. This is Ribosomal RNA small subunit methyltransferase H from Heliobacterium modesticaldum (strain ATCC 51547 / Ice1).